The chain runs to 138 residues: Small ribosomal subunit protein uS12 (138 aa).

D89 is modified (3-methylthioaspartic acid). The interval 101-138 (ALDTAGTQNRNQGRSKYGTKRPKKGAATAAKGPVKGKK) is disordered. A compositionally biased stretch (polar residues) spans 105-114 (AGTQNRNQGR). Residues 125-138 (GAATAAKGPVKGKK) are compositionally biased toward low complexity.

It belongs to the universal ribosomal protein uS12 family. In terms of assembly, part of the 30S ribosomal subunit. Contacts proteins S8 and S17. May interact with IF1 in the 30S initiation complex.

Functionally, with S4 and S5 plays an important role in translational accuracy. In terms of biological role, interacts with and stabilizes bases of the 16S rRNA that are involved in tRNA selection in the A site and with the mRNA backbone. Located at the interface of the 30S and 50S subunits, it traverses the body of the 30S subunit contacting proteins on the other side and probably holding the rRNA structure together. The combined cluster of proteins S8, S12 and S17 appears to hold together the shoulder and platform of the 30S subunit. The chain is Small ribosomal subunit protein uS12 from Heliobacterium modesticaldum (strain ATCC 51547 / Ice1).